The primary structure comprises 800 residues: Elongation factor G, mitochondrial (800 aa).

The N-terminal 34 residues, 1–34 (MSVHTVMRTQVRSLAGMPKAAMRPLGNSFCARRY), are a transit peptide targeting the mitochondrion. Residues 99–385 (SKVRNIGIAA…GICDYLPNPA (287 aa)) enclose the tr-type G domain. GTP-binding positions include 108–115 (AHIDSGKT), 183–187 (DTPGH), and 237–240 (NKMD).

The protein belongs to the TRAFAC class translation factor GTPase superfamily. Classic translation factor GTPase family. EF-G/EF-2 subfamily.

Its subcellular location is the mitochondrion. It participates in protein biosynthesis; polypeptide chain elongation. In terms of biological role, mitochondrial GTPase that catalyzes the GTP-dependent ribosomal translocation step during translation elongation. During this step, the ribosome changes from the pre-translocational (PRE) to the post-translocational (POST) state as the newly formed A-site-bound peptidyl-tRNA and P-site-bound deacylated tRNA move to the P and E sites, respectively. Catalyzes the coordinated movement of the two tRNA molecules, the mRNA and conformational changes in the ribosome. This is Elongation factor G, mitochondrial from Coccidioides immitis (strain RS) (Valley fever fungus).